A 163-amino-acid polypeptide reads, in one-letter code: Small heat shock protein C1 (163 aa).

The sHSP domain maps to 55–163 (TFYESSSLKS…EQDSREITIN (109 aa)).

The protein belongs to the small heat shock protein (HSP20) family.

The chain is Small heat shock protein C1 (hspC1) from Rickettsia prowazekii (strain Madrid E).